Here is a 204-residue protein sequence, read N- to C-terminus: Holliday junction branch migration complex subunit RuvA (204 aa).

Residues 1–64 (MIAQLKGSLA…EDAFLLYGFH (64 aa)) are domain I. A domain II region spans residues 65–143 (SESQRKVFNL…ALPMAAPTTA (79 aa)). Positions 144–154 (IGAATMAANPA) are flexible linker. A domain III region spans residues 154-204 (AGLREEVASALLNLGYKPPQVDAALAKLFSAGEITDISVALKGALKLLAPA).

This sequence belongs to the RuvA family. As to quaternary structure, homotetramer. Forms an RuvA(8)-RuvB(12)-Holliday junction (HJ) complex. HJ DNA is sandwiched between 2 RuvA tetramers; dsDNA enters through RuvA and exits via RuvB. An RuvB hexamer assembles on each DNA strand where it exits the tetramer. Each RuvB hexamer is contacted by two RuvA subunits (via domain III) on 2 adjacent RuvB subunits; this complex drives branch migration. In the full resolvosome a probable DNA-RuvA(4)-RuvB(12)-RuvC(2) complex forms which resolves the HJ.

It is found in the cytoplasm. The RuvA-RuvB-RuvC complex processes Holliday junction (HJ) DNA during genetic recombination and DNA repair, while the RuvA-RuvB complex plays an important role in the rescue of blocked DNA replication forks via replication fork reversal (RFR). RuvA specifically binds to HJ cruciform DNA, conferring on it an open structure. The RuvB hexamer acts as an ATP-dependent pump, pulling dsDNA into and through the RuvAB complex. HJ branch migration allows RuvC to scan DNA until it finds its consensus sequence, where it cleaves and resolves the cruciform DNA. This is Holliday junction branch migration complex subunit RuvA from Magnetococcus marinus (strain ATCC BAA-1437 / JCM 17883 / MC-1).